Consider the following 751-residue polypeptide: WD repeat-containing protein 91 (751 aa).

Residues 188-212 are a coiled coil; that stretch reads IQEENESLRHKLFALQAESSRMKKE. Residues 264–395 form a disordered region; the sequence is LSQSKKGPAR…ASSTESVGVR (132 aa). The segment covering 278 to 287 has biased composition (polar residues); it reads SGASPTQTGS. Basic and acidic residues predominate over residues 334–346; that stretch reads RLQEHGKERRELL. A compositionally biased stretch (polar residues) spans 377 to 391; that stretch reads QAETSTKMPASSTES. WD repeat units lie at residues 410-449, 452-492, 497-559, 564-603, 606-645, 668-706, and 713-751; these read EHHS…QTKA, ISKS…NLCE, EDMP…QQLQ, PEPI…CAMS, AHDG…LKIS, VQFP…KVLE, and GHRA…AQKS.

This sequence belongs to the WD repeat WDR91 family.

Its subcellular location is the early endosome membrane. The protein resides in the late endosome membrane. Functionally, functions as a negative regulator of the PI3 kinase/PI3K activity associated with endosomal membranes. By modifying the phosphatidylinositol 3-phosphate/PtdInsP3 content of endosomal membranes may regulate endosome fusion, recycling, sorting and early to late endosome transport. The protein is WD repeat-containing protein 91 of Gallus gallus (Chicken).